The sequence spans 1100 residues: Tyrosine-protein kinase JAK3 (1100 aa).

A cytokine/interferon/growth hormone receptors region spans residues 1 to 223; the sequence is MAPPSEETPL…RRTVVQALRR (223 aa). Serine 17 is modified (phosphoserine). In terms of domain architecture, FERM spans 24-353; the sequence is GALHVLLPPR…GYFRLICDSR (330 aa). An SH2; atypical domain is found at 372–472; sequence LCHGPITLDF…GTALNLTSCC (101 aa). A Protein kinase 1 domain is found at 517 to 777; sequence LEWHENLGHG…AILRDLNGLI (261 aa). Tyrosine 781 is modified (phosphotyrosine; by autocatalysis). The Protein kinase 2 domain maps to 818-1091; the sequence is LKYISLLGKG…PAFDTLSPQL (274 aa). ATP contacts are provided by residues 824–832 and lysine 851; that span reads LGKGNFGSV. A phosphotyrosine mark is found at tyrosine 900 and tyrosine 935. The Proton acceptor role is filled by aspartate 945. Phosphotyrosine; by autocatalysis is present on residues tyrosine 976 and tyrosine 977.

The protein belongs to the protein kinase superfamily. Tyr protein kinase family. JAK subfamily. Interacts with STAM2 and MYO18A. Interacts with SHB. Interacts with CD69. Autophosphorylated, leading to regulate its activity. IL2 promotes phosphorylation on tyrosine residues, including autophosphorylation on Tyr-781. Dephosphorylation of Tyr-976 and Tyr-977 by PTPN2 negatively regulates cytokine-mediated signaling. In terms of tissue distribution, in contrast with the ubiquitous expression of the other JAKs, JAK3 is predominantly expressed in hematopoietic tissues.

Its subcellular location is the endomembrane system. It is found in the cytoplasm. The catalysed reaction is L-tyrosyl-[protein] + ATP = O-phospho-L-tyrosyl-[protein] + ADP + H(+). Functionally, non-receptor tyrosine kinase involved in various processes such as cell growth, development, or differentiation. Mediates essential signaling events in both innate and adaptive immunity and plays a crucial role in hematopoiesis during T-cells development. In the cytoplasm, plays a pivotal role in signal transduction via its association with type I receptors sharing the common subunit gamma such as IL2R, IL4R, IL7R, IL9R, IL15R and IL21R. Following ligand binding to cell surface receptors, phosphorylates specific tyrosine residues on the cytoplasmic tails of the receptor, creating docking sites for STATs proteins. Subsequently, phosphorylates the STATs proteins once they are recruited to the receptor. Phosphorylated STATs then form homodimer or heterodimers and translocate to the nucleus to activate gene transcription. For example, upon IL2R activation by IL2, JAK1 and JAK3 molecules bind to IL2R beta (IL2RB) and gamma chain (IL2RG) subunits inducing the tyrosine phosphorylation of both receptor subunits on their cytoplasmic domain. Then, STAT5A and STAT5B are recruited, phosphorylated and activated by JAK1 and JAK3. Once activated, dimerized STAT5 translocates to the nucleus and promotes the transcription of specific target genes in a cytokine-specific fashion. This is Tyrosine-protein kinase JAK3 from Rattus norvegicus (Rat).